The following is a 63-amino-acid chain: Race-specific elicitor A9 (63 aa).

An N-terminal signal peptide occupies residues methionine 1 to alanine 23. Residues alanine 24–aspartate 35 constitute a propeptide that is removed on maturation. Disulfide bonds link cysteine 37–cysteine 51, cysteine 41–cysteine 54, and cysteine 47–cysteine 61.

In terms of biological role, this necrosis-inducing peptide induces a hypersensitive response on Cf-9 tomato genotypes. Race-specific elicitors are compounds which only induce defense responses in genotypes of host plants which are resistant to the pathogenic race that produces the elicitor, but not in susceptible genotypes. This Passalora fulva (Tomato leaf mold) protein is Race-specific elicitor A9 (AVR9).